The sequence spans 662 residues: MINHITDNQFKLVSKYQPSGDQPQAIEQLVDNIEGGEKAQILMGATGTGKTYTMSQVISKVNKPTLVIAHNKTLAGQLYGEFKEFFPENAVEYFVSYYDYYQPEAYVPSSDTYIEKDSSVNDEIDKLRHSATSALLERNDVIVVASVSCIYGLGSPKEYADSVVSLRPGLEISRDKLLNDLVDIQFERNDIDFQRGRFRVRGDVVEIFPASRDEHAFRVEFFGDEIDRIREVEALTGQVLGEVDHLAIFPATHFVTNDDHMEVAIAKIQAELEEQLAVFEKEGKLLEAQRLKQRTEYDIEMLREMGYTNGVENYSRHMDGRSEGEPPYTLLDFFPDDFLIMIDESHMTMGQIKGMYNGDRSRKEMLVNYGFRLPSALDNRPLRREEFESHVHQIVYVSATPGDYENEQTETVIEQIIRPTGLLDPEVEVRPTMGQIDDLLGEINARVEKNERTFITTLTKKMAEDLTDYFKEMGIKVKYMHSDIKTLERTEIIRDLRLGVFDVLVGINLLREGIDVPEVSLVAILDADKEGFLRNERGLIQTIGRAARNSEGHVIMYADTVTQSMQRAIDETARRRKIQMAYNEEHGIVPQTIKKEIRDLIAVTKAVAKEEDKEVDINSLNKQERKELVKKLEKQMQEAVEVLDFELAAQIRDMMLEVKALD.

The region spanning 31–188 (DNIEGGEKAQ…NDLVDIQFER (158 aa)) is the Helicase ATP-binding domain. 44–51 (GATGTGKT) contributes to the ATP binding site. Positions 97–120 (YYDYYQPEAYVPSSDTYIEKDSSV) match the Beta-hairpin motif. Residues 435-601 (QIDDLLGEIN…TIKKEIRDLI (167 aa)) form the Helicase C-terminal domain. Residues 626–661 (KELVKKLEKQMQEAVEVLDFELAAQIRDMMLEVKAL) enclose the UVR domain.

The protein belongs to the UvrB family. As to quaternary structure, forms a heterotetramer with UvrA during the search for lesions. Interacts with UvrC in an incision complex.

The protein resides in the cytoplasm. Functionally, the UvrABC repair system catalyzes the recognition and processing of DNA lesions. A damage recognition complex composed of 2 UvrA and 2 UvrB subunits scans DNA for abnormalities. Upon binding of the UvrA(2)B(2) complex to a putative damaged site, the DNA wraps around one UvrB monomer. DNA wrap is dependent on ATP binding by UvrB and probably causes local melting of the DNA helix, facilitating insertion of UvrB beta-hairpin between the DNA strands. Then UvrB probes one DNA strand for the presence of a lesion. If a lesion is found the UvrA subunits dissociate and the UvrB-DNA preincision complex is formed. This complex is subsequently bound by UvrC and the second UvrB is released. If no lesion is found, the DNA wraps around the other UvrB subunit that will check the other stand for damage. This chain is UvrABC system protein B, found in Streptococcus pneumoniae serotype 2 (strain D39 / NCTC 7466).